The following is a 1102-amino-acid chain: Ubiquitin carboxyl-terminal hydrolase 7 (1102 aa).

Low complexity predominate over residues 1–10 (MNHQQQQQQQ). A disordered region spans residues 1–38 (MNHQQQQQQQKAGEQQLSEPEDMEMEAGDTDDPPRITQ). Residues 1–208 (MNHQQQQQQQ…APHGVAWDSK (208 aa)) are interaction with TSPYL5. Ser18 carries the post-translational modification Phosphoserine. A compositionally biased stretch (acidic residues) spans 19–31 (EPEDMEMEAGDTD). Phosphoserine is present on Ser49. The segment at 53–208 (NTAEEDMEDD…APHGVAWDSK (156 aa)) is interaction with p53/TP53, MDM2 and EBNA1. In terms of domain architecture, MATH spans 68-195 (EATFQFTVER…DDKVTFEVFV (128 aa)). Residues 70–205 (TFQFTVERFS…QADAPHGVAW (136 aa)) are necessary for nuclear localization. Residues 214–521 (VGLKNQGATC…NAYMLVYIRE (308 aa)) form the USP domain. Cys223 acts as the Nucleophile in catalysis. The active-site Proton acceptor is the His464. An interaction with ICP0/VMW110 region spans residues 622-801 (LWPMQARSNG…HRVDVIFCDK (180 aa)). At Lys869 the chain carries N6-acetyllysine; alternate. Residue Lys869 forms a Glycyl lysine isopeptide (Lys-Gly) (interchain with G-Cter in SUMO2); alternate linkage. Residue Lys869 forms a Glycyl lysine isopeptide (Lys-Gly) (interchain with G-Cter in ubiquitin); alternate linkage. Lys882 participates in a covalent cross-link: Glycyl lysine isopeptide (Lys-Gly) (interchain with G-Cter in SUMO2). Ser963 carries the phosphoserine modification. N6-acetyllysine occurs at positions 1084 and 1096.

The protein belongs to the peptidase C19 family. Monomer. Homodimer. Part of a complex with DAXX, MDM2, RASSF1 and USP7. Part of a complex with DAXX, MDM2 and USP7. Interacts with MDM2; the interaction is independent of p53/TP53. Interacts with DAXX; the interaction is direct and independent of MDM2 and p53/TP53. Component of a complex composed of KMT2E/MLL5 (isoform 3), OGT (isoform 1) and USP7; the complex stabilizes KMT2E/MLL5, preventing KMT2E/MLL5 ubiquitination and proteasomal-mediated degradation. Interacts (via MATH domain) with KMT2E/MLL5 isoform 3. Interacts with OGT isoform 1. Interacts with FOXO4; the interaction is enhanced in presence of hydrogen peroxide and occurs independently of p53/TP53. Interacts with p53/TP53; the interaction is enhanced in response to DNA damage. Interacts with TSPYL5; this impairs interaction with p53/TP53. Interacts with PTEN; the interaction is direct. Interacts with ATXN1 and the strength of interaction is influenced by the length of the poly-Gln region in ATXN1. A weaker interaction seen with mutants having longer poly-Gln regions. Interacts with KIAA1530/UVSSA. Interacts with ABRAXAS2; the interaction is direct. Identified in a complex with TP53/p53 and ABRAXAS2. Interacts with MEX3C and antagonizes its ability to degrade mRNA. Interacts with DNMT1 and UHRF1. Interacts with FOXP3. Interacts (via MATH domain) with RNF220. Associated component of the Polycomb group (PcG) multiprotein PRC1-like complex. Interacts with EPOP. Interacts with OTUD4 and USP9X; the interaction is direct. Interacts with CRY2. Interacts with REST. Interacts with ERCC6. Part of a complex consisting of USP7, MAGEL2 and TRIM27; directly interacts with MAGEL2; directly interacts with TRIM27. In terms of assembly, (Microbial infection) Isoform 1 and isoform 2 interact with herpesvirus 1 trans-acting transcriptional protein ICP0/VMW110. Binding to ICP0/VMW110 may modulate the substrate specificity or activity of USP7 to stabilize viral proteins. As to quaternary structure, (Microbial infection) Interacts with Epstein-Barr virus EBNA1; the interaction is independent and simultaneous to EBNA1 interaction with USP7 as well as necessary for PML nuclear bodies disruption by EBNA1. EBNA1, USP7 and CSNK2B form a ternary complex. EBNA1 shows a 10-fold higher affinity than p53/TP53 and can compete with it for USP7 binding. (Microbial infection) Interacts with human cytomegalovirus proteins UL35 and UL35A; these interactions inhibit the ability of USP7 to form nuclear bodies. In terms of assembly, (Microbial infection) Interacts with herpes virus 8/HHV-8 proteins vIRF-1 and vIRF-3; these interactions may disrupt TP53 signaling pathway during viral infection by decreasing the availability of USP7 for deubiquitinating and stabilizing TP53. As to quaternary structure, (Microbial infection) Interacts with herpes virus 8/HHV-8 protein vIRF-2; this interaction modulates antiviral signaling via disruption of USP7 interactions with innate immune signaling proteins TRAF3 and TRAF6 thus affecting their ubiquitination. Post-translationally, isoform 1: Phosphorylated. Isoform 1 is phosphorylated at positions Ser-18 and Ser-963. Isoform 2: Not phosphorylated. Isoform 1: Polyneddylated. Isoform 2: Not Polyneddylated. In terms of processing, isoform 1 and isoform 2: Not sumoylated. Post-translationally, isoform 1 and isoform 2: Polyubiquitinated by herpesvirus 1 trans-acting transcriptional protein ICP0/VMW110; leading to its subsequent proteasomal degradation. Isoform 1: Ubiquitinated at Lys-869. Expressed in neural progenitor cells (at protein level). Widely expressed. Overexpressed in prostate cancer.

The protein localises to the nucleus. The protein resides in the cytoplasm. It is found in the PML body. It localises to the chromosome. It carries out the reaction Thiol-dependent hydrolysis of ester, thioester, amide, peptide and isopeptide bonds formed by the C-terminal Gly of ubiquitin (a 76-residue protein attached to proteins as an intracellular targeting signal).. Inhibited by N-ethyl-maleimide (NEM) and divalent cations. Tolerates high concentrations of NaCl but is inhibited at concentrations of 195 mM and higher. In terms of biological role, hydrolase that deubiquitinates target proteins such as ARMC5, FOXO4, DEPTOR, KAT5, p53/TP53, MDM2, ERCC6, DNMT1, UHRF1, PTEN, KMT2E/MLL5 and DAXX. Together with DAXX, prevents MDM2 self-ubiquitination and enhances the E3 ligase activity of MDM2 towards p53/TP53, thereby promoting p53/TP53 ubiquitination and proteasomal degradation. Deubiquitinates p53/TP53, preventing degradation of p53/TP53, and enhances p53/TP53-dependent transcription regulation, cell growth repression and apoptosis. Deubiquitinates p53/TP53 and MDM2 and strongly stabilizes p53/TP53 even in the presence of excess MDM2, and also induces p53/TP53-dependent cell growth repression and apoptosis. Deubiquitination of FOXO4 in presence of hydrogen peroxide is not dependent on p53/TP53 and inhibits FOXO4-induced transcriptional activity. In association with DAXX, is involved in the deubiquitination and translocation of PTEN from the nucleus to the cytoplasm, both processes that are counteracted by PML. Deubiquitinates KMT2E/MLL5 preventing KMT2E/MLL5 proteasomal-mediated degradation. Involved in cell proliferation during early embryonic development. Involved in transcription-coupled nucleotide excision repair (TC-NER) in response to UV damage: recruited to DNA damage sites following interaction with KIAA1530/UVSSA and promotes deubiquitination of ERCC6, preventing UV-induced degradation of ERCC6. Involved in maintenance of DNA methylation via its interaction with UHRF1 and DNMT1: acts by mediating deubiquitination of UHRF1 and DNMT1, preventing their degradation and promoting DNA methylation by DNMT1. Deubiquitinates alkylation repair enzyme ALKBH3. OTUD4 recruits USP7 and USP9X to stabilize ALKBH3, thereby promoting the repair of alkylated DNA lesions. Acts as a chromatin regulator via its association with the Polycomb group (PcG) multiprotein PRC1-like complex; may act by deubiquitinating components of the PRC1-like complex. Able to mediate deubiquitination of histone H2B; it is however unsure whether this activity takes place in vivo. Exhibits a preference towards 'Lys-48'-linked ubiquitin chains. Increases regulatory T-cells (Treg) suppressive capacity by deubiquitinating and stabilizing the transcription factor FOXP3 which is crucial for Treg cell function. Plays a role in the maintenance of the circadian clock periodicity via deubiquitination and stabilization of the CRY1 and CRY2 proteins. Deubiquitinates REST, thereby stabilizing REST and promoting the maintenance of neural progenitor cells. Deubiquitinates SIRT7, inhibiting SIRT7 histone deacetylase activity and regulating gluconeogenesis. Involved in the regulation of WASH-dependent actin polymerization at the surface of endosomes and the regulation of endosomal protein recycling. It maintains optimal WASH complex activity and precise F-actin levels via deubiquitination of TRIM27 and WASHC1. Mediates the deubiquitination of phosphorylated DEPTOR, promoting its stability and leading to decreased mTORC1 signaling. (Microbial infection) Contributes to the overall stabilization and trans-activation capability of the herpesvirus 1 trans-acting transcriptional protein ICP0/VMW110 during HSV-1 infection. Its function is as follows. (Microbial infection) Upon infection with Epstein-Barr virus, the interaction with viral EBNA1 increases the association of USP7 with PML proteins, which is required for the polyubiquitylation and degradation of PML. This chain is Ubiquitin carboxyl-terminal hydrolase 7, found in Homo sapiens (Human).